The sequence spans 146 residues: D-aminoacyl-tRNA deacylase (146 aa).

Positions 138 to 139 (GP) match the Gly-cisPro motif, important for rejection of L-amino acids motif.

The protein belongs to the DTD family. Homodimer.

It is found in the cytoplasm. The catalysed reaction is glycyl-tRNA(Ala) + H2O = tRNA(Ala) + glycine + H(+). It carries out the reaction a D-aminoacyl-tRNA + H2O = a tRNA + a D-alpha-amino acid + H(+). An aminoacyl-tRNA editing enzyme that deacylates mischarged D-aminoacyl-tRNAs. Also deacylates mischarged glycyl-tRNA(Ala), protecting cells against glycine mischarging by AlaRS. Acts via tRNA-based rather than protein-based catalysis; rejects L-amino acids rather than detecting D-amino acids in the active site. By recycling D-aminoacyl-tRNA to D-amino acids and free tRNA molecules, this enzyme counteracts the toxicity associated with the formation of D-aminoacyl-tRNA entities in vivo and helps enforce protein L-homochirality. This Tolumonas auensis (strain DSM 9187 / NBRC 110442 / TA 4) protein is D-aminoacyl-tRNA deacylase.